The sequence spans 258 residues: Triosephosphate isomerase (258 aa).

9–11 (NWK) is a binding site for substrate. The active-site Electrophile is the His-95. Glu-167 serves as the catalytic Proton acceptor. 2 residues coordinate substrate: Gly-173 and Ser-212.

The protein belongs to the triosephosphate isomerase family. Homodimer.

The protein localises to the cytoplasm. It carries out the reaction D-glyceraldehyde 3-phosphate = dihydroxyacetone phosphate. It participates in carbohydrate biosynthesis; gluconeogenesis. It functions in the pathway carbohydrate degradation; glycolysis; D-glyceraldehyde 3-phosphate from glycerone phosphate: step 1/1. In terms of biological role, involved in the gluconeogenesis. Catalyzes stereospecifically the conversion of dihydroxyacetone phosphate (DHAP) to D-glyceraldehyde-3-phosphate (G3P). This Blochmanniella pennsylvanica (strain BPEN) protein is Triosephosphate isomerase.